A 366-amino-acid chain; its full sequence is uncharacterized protein (366 aa).

The interval Q199–D267 is disordered.

This is an uncharacterized protein from Haemophilus influenzae (strain ATCC 51907 / DSM 11121 / KW20 / Rd).